We begin with the raw amino-acid sequence, 341 residues long: Ubiquinone biosynthesis protein COQ4, mitochondrial (341 aa).

The transit peptide at 1 to 16 directs the protein to the mitochondrion; the sequence is MLSRISSVRIGTQVRQ. H220, D221, H224, and E236 together coordinate Zn(2+).

Belongs to the COQ4 family. In terms of assembly, component of a multi-subunit COQ enzyme complex, composed of at least COQ3, COQ4, COQ5, COQ6, COQ7 and COQ9. The cofactor is Zn(2+).

Its subcellular location is the mitochondrion inner membrane. It catalyses the reaction a 4-hydroxy-3-methoxy-5-(all-trans-polyprenyl)benzoate + H(+) = a 2-methoxy-6-(all-trans-polyprenyl)phenol + CO2. It functions in the pathway cofactor biosynthesis; ubiquinone biosynthesis. Functionally, lyase that catalyzes the C1-decarboxylation of 4-hydroxy-3-methoxy-5-(all-trans-polyprenyl)benzoic acid into 2-methoxy-6-(all-trans-polyprenyl)phenol during ubiquinone biosynthesis. This is Ubiquinone biosynthesis protein COQ4, mitochondrial from Vanderwaltozyma polyspora (strain ATCC 22028 / DSM 70294 / BCRC 21397 / CBS 2163 / NBRC 10782 / NRRL Y-8283 / UCD 57-17) (Kluyveromyces polysporus).